Here is a 2350-residue protein sequence, read N- to C-terminus: Probable JmjC domain-containing histone demethylation protein 2C (2350 aa).

Disordered regions lie at residues 96–302 (TRAQ…LQEC) and 314–336 (PKDRLVSRTPTPKCVTDIKNDTH). Positions 98-127 (AQANSPRPAMNSQAAVPKQNTHQQQQQRSI) are enriched in polar residues. Residues Ser-135 and Ser-138 each carry the phosphoserine modification. Basic and acidic residues predominate over residues 141–160 (DEEKMKEDKYDCVSRGENPK). Residues 161 to 171 (GKNKHVVTKRR) show a composition bias toward basic residues. Residues 172–189 (KPEEAEKRLSMKRLRTDN) are compositionally biased toward basic and acidic residues. The segment covering 190 to 200 (ASDASESSDAE) has biased composition (low complexity). Ser-191 and Ser-194 each carry phosphoserine. Basic and acidic residues predominate over residues 257–280 (QEDKNHNEGEKPKSTDSHLQDKMT). Residues 281-302 (LRSSEQATVADHNSNDSVLQEC) are compositionally biased toward polar residues. Residues Ser-294 and Ser-320 each carry the phosphoserine modification. Thr-324 bears the Phosphothreonine mark. Phosphoserine occurs at positions 420, 436, 457, 458, 460, 471, and 762. 5 disordered regions span residues 426–486 (SVTE…NSQA), 747–766 (SSAEPHRPHKITVHSSPPLT), 859–883 (RENYSRVVPSSSSPKSHAIKQDKDV), 1030–1083 (RKES…DQSL), and 1422–1508 (EKVS…VPRS). 2 stretches are compositionally biased toward low complexity: residues 863–874 (SRVVPSSSSPKS) and 1034–1045 (SYSSLSPPTLTP). Positions 1071 to 1083 (SQSNFKNSSDQSL) are enriched in polar residues. Positions 1454–1463 (KRQPKPTYKK) are enriched in basic residues. Residues 1464–1480 (KQNDLQKRKGEVEEDSK) show a composition bias toward basic and acidic residues. The C6-type zinc finger occupies 1657 to 1682 (CDACEATLFNVHWVCRKCGFVACLDC). A compositionally biased stretch (polar residues) spans 1776 to 1818 (KTSVSLPESQQQNSPQKSQTNGNSSPGSASTDSRLTPPESQSP). The tract at residues 1776–1874 (KTSVSLPESQ…PASQSNEQGS (99 aa)) is disordered. Ser-1800 bears the Phosphoserine mark. The span at 1826–1849 (AEQKSREEKQENKEFTLEREIKED) shows a compositional bias: basic and acidic residues. A compositionally biased stretch (polar residues) spans 1855–1874 (SDSPNGSTSPPASQSNEQGS). The LXXLL motif signature appears at 1876–1880 (LRDLL). Residues 1933-1962 (PNKTSKINIKSEPNEEPKESSLPATDESNK) form a disordered region. A Glycyl lysine isopeptide (Lys-Gly) (interchain with G-Cter in SUMO2) cross-link involves residue Lys-1942. The 225-residue stretch at 2084 to 2308 (MPTRYEDFLR…QSFHLTQELR (225 aa)) folds into the JmjC domain. 3 residues coordinate Fe cation: His-2146, Glu-2148, and His-2276.

Belongs to the JHDM2 histone demethylase family. Requires Fe(2+) as cofactor.

It is found in the nucleus. In terms of biological role, probable histone demethylase that specifically demethylates 'Lys-9' of histone H3, thereby playing a central role in histone code. Demethylation of Lys residue generates formaldehyde and succinate. May be involved in hormone-dependent transcriptional activation, by participating in recruitment to androgen-receptor target genes. The chain is Probable JmjC domain-containing histone demethylation protein 2C (Jmjd1c) from Mus musculus (Mouse).